Here is a 427-residue protein sequence, read N- to C-terminus: Peptidase B (427 aa).

2 residues coordinate Mn(2+): lysine 195 and aspartate 200. Lysine 207 is a catalytic residue. Aspartate 218, aspartate 277, and glutamate 279 together coordinate Mn(2+). The active site involves arginine 281.

It belongs to the peptidase M17 family. Homohexamer. It depends on Mn(2+) as a cofactor.

Its subcellular location is the cytoplasm. It carries out the reaction Release of an N-terminal amino acid, Xaa, from a peptide or arylamide. Xaa is preferably Glu or Asp but may be other amino acids, including Leu, Met, His, Cys and Gln.. Its function is as follows. Probably plays an important role in intracellular peptide degradation. This is Peptidase B from Salmonella choleraesuis (strain SC-B67).